The following is a 384-amino-acid chain: 8-amino-7-oxononanoate synthase (384 aa).

Position 21 (R21) interacts with substrate. Position 108-109 (108-109 (GF)) interacts with pyridoxal 5'-phosphate. Residue H133 participates in substrate binding. Positions 179, 207, and 233 each coordinate pyridoxal 5'-phosphate. K236 is modified (N6-(pyridoxal phosphate)lysine). Residue T352 coordinates substrate.

Belongs to the class-II pyridoxal-phosphate-dependent aminotransferase family. BioF subfamily. In terms of assembly, homodimer. Requires pyridoxal 5'-phosphate as cofactor.

The catalysed reaction is 6-carboxyhexanoyl-[ACP] + L-alanine + H(+) = (8S)-8-amino-7-oxononanoate + holo-[ACP] + CO2. It participates in cofactor biosynthesis; biotin biosynthesis. Catalyzes the decarboxylative condensation of pimeloyl-[acyl-carrier protein] and L-alanine to produce 8-amino-7-oxononanoate (AON), [acyl-carrier protein], and carbon dioxide. The sequence is that of 8-amino-7-oxononanoate synthase from Escherichia coli O17:K52:H18 (strain UMN026 / ExPEC).